The chain runs to 111 residues: Cytochrome c3, 26 kDa (111 aa).

Residues H30, H33, C38, C41, H42, H43, C54, C59, H60, H77, C86, C89, H90, C105, C108, and H109 each coordinate heme c.

In terms of assembly, homodimer. It depends on heme c as a cofactor.

It localises to the periplasm. In terms of biological role, participates in sulfate respiration coupled with phosphorylation by transferring electrons from the enzyme dehydrogenase to ferredoxin. This is Cytochrome c3, 26 kDa from Desulfomicrobium norvegicum (strain DSM 1741 / NCIMB 8310) (Desulfovibrio baculatus (strain Norway 4)).